The following is a 108-amino-acid chain: Large ribosomal subunit protein bL31B (108 aa).

The tract at residues 88–108 (AAVEEAPAVKSKKKAPIKKKK) is disordered. Positions 97-108 (KSKKKAPIKKKK) are enriched in basic residues.

It belongs to the bacterial ribosomal protein bL31 family. Type B subfamily. Part of the 50S ribosomal subunit.

This is Large ribosomal subunit protein bL31B from Chlamydia abortus (strain DSM 27085 / S26/3) (Chlamydophila abortus).